A 408-amino-acid polypeptide reads, in one-letter code: Ribosomal RNA large subunit methyltransferase DR_0049 (408 aa).

It belongs to the methyltransferase superfamily.

It carries out the reaction cytidine(2499) in 23S rRNA + S-adenosyl-L-methionine = 5-methylcytidine(2499) in 23S rRNA + S-adenosyl-L-homocysteine + H(+). Specifically methylates the cytosine at position 2499 (m5C2499) of 23S rRNA. The polypeptide is Ribosomal RNA large subunit methyltransferase DR_0049 (Deinococcus radiodurans (strain ATCC 13939 / DSM 20539 / JCM 16871 / CCUG 27074 / LMG 4051 / NBRC 15346 / NCIMB 9279 / VKM B-1422 / R1)).